A 1244-amino-acid polypeptide reads, in one-letter code: MSGTKWTEEQLSAITTRDCNLLVAAAAGSGKTAVLVERIIKIITNEENPIDIDKLLVVTFTSAAAAEMRERIANAISKKLDETPTSKNLQKQLTLLNRSNIMTIHSFCLGVIKNNFHKIDLDPSFRICDQTEGILLKMEIIDELFDDKYDEENQEFIKFIEAFSSYKSDNALKELVLSLYNFIMAGPWPKKWLKAASEDFDIKTLQELDESKWVSVLKESIKIELDGYIKMMQKAVELINETDGLEPYFEGFSSELDLIVNAYNNVESSLNDLYNSLNLITFNRLKTIKKNTVSDENIQNLVKQIRDQVKKKISALIEGTFIATPDKMLDNIIKSYPYINQLTELTSEFIDRFNAKKKEKNILDFNDLEHLCLKILIEDNEENQIVPSTIAQKFKDYFEEVLVDEYQDSNNVQEAIIELVSRKNSDNPNVFMVGDVKQSIYKFRQAKPELFIDKYNSYSLDKGINRKIQLYKNFRSREEVINGVNYIFKSVMSKTVGELEYTDVEALNLGASYPKKKNVDDIIGGPIEVHILDRSDNKEENDESKLQAEEEEIGDVNLEARIIVKRINDLISKKDGSKFKVLDKDTGEYRDLKYKDIVILLRATKNWSEVLLDELGLAGIPVYADTGSGYFESIEIRTIMSLLKVIDNPMQDVPMLSLLISPIIGLSAEELTDIRLIDKEKYFYENIIKISTEKLISEELQEKCEYILSSIDKWRRKSIYMPIDEFIWYLYMDTAYYGYVGAMPNGVLRQANLKILFQRARQFSETSFKGLFNFINFINKLTKSSGDMGSAKILGENEDVVRIMSIHKSKGLEFPVVFLAGCGKNFNLMDLNNKILYHEELGLGPEYINLENRTSITTLPKEAIKKRMKLETLSEEMRVLYVAFTRAKEKLIITGAVRNAEKSIEKWINSAVLDKDVILPYEISKGKSYLDWIGMALCKHKDGKILRKKLGFSSEMCKDDLSMWKISIWNKYELDMYDELDENQEELDVKISILDKDVNKKVKSEVYRRLGYEYEFKESTKLTSNISVSDLKRRNMNDNIDTLEIFDLEEEDNKNKDVITPKFLQEKKGISSAERGTAIHFAMKKIDFSKVGTLKEIKEQLNKLYEEEFILQEEYSSINPYKILSFFKSNLGKKMLDVYNKGGKIYREIPFHTEISSLELDESLPQKYANEKIRLQGIIDCFFKCDDEIILLDYKTDYVENEEEFKEKYKSQLLYYSEAVFKMTGKKVNKRYLYSFYLEKEILI.

The UvrD-like helicase ATP-binding domain occupies threonine 4–arginine 477. Alanine 25–threonine 32 is an ATP binding site. Residues lysine 517–glycine 811 form the UvrD-like helicase C-terminal domain.

This sequence belongs to the helicase family. AddA subfamily. As to quaternary structure, heterodimer of AddA and AddB/RexB. Requires Mg(2+) as cofactor.

It catalyses the reaction Couples ATP hydrolysis with the unwinding of duplex DNA by translocating in the 3'-5' direction.. The enzyme catalyses ATP + H2O = ADP + phosphate + H(+). The heterodimer acts as both an ATP-dependent DNA helicase and an ATP-dependent, dual-direction single-stranded exonuclease. Recognizes the chi site generating a DNA molecule suitable for the initiation of homologous recombination. The AddA nuclease domain is required for chi fragment generation; this subunit has the helicase and 3' -&gt; 5' nuclease activities. The chain is ATP-dependent helicase/nuclease subunit A from Clostridium botulinum (strain Alaska E43 / Type E3).